The following is a 245-amino-acid chain: Type III pantothenate kinase (245 aa).

Asp-6–Lys-13 serves as a coordination point for ATP. Substrate-binding positions include Tyr-86 and Gly-93–Arg-96. Asp-95 serves as the catalytic Proton acceptor. Asp-116 is a K(+) binding site. Thr-119 lines the ATP pocket. A substrate-binding site is contributed by Thr-171.

The protein belongs to the type III pantothenate kinase family. In terms of assembly, homodimer. NH4(+) serves as cofactor. Requires K(+) as cofactor.

The protein resides in the cytoplasm. The enzyme catalyses (R)-pantothenate + ATP = (R)-4'-phosphopantothenate + ADP + H(+). It functions in the pathway cofactor biosynthesis; coenzyme A biosynthesis; CoA from (R)-pantothenate: step 1/5. Catalyzes the phosphorylation of pantothenate (Pan), the first step in CoA biosynthesis. This chain is Type III pantothenate kinase, found in Azobacteroides pseudotrichonymphae genomovar. CFP2.